Consider the following 354-residue polypeptide: Selenide, water dikinase (354 aa).

The active site involves Cys-23. ATP is bound by residues Lys-26 and 54-56; that span reads TSD. Asp-57 contributes to the Mg(2+) binding site. Residues Asp-74, Asp-97, and 145 to 147 contribute to the ATP site; that span reads GHS. Asp-97 is a Mg(2+) binding site. Asp-233 lines the Mg(2+) pocket.

It belongs to the selenophosphate synthase 1 family. Class I subfamily. Homodimer. Requires Mg(2+) as cofactor.

It catalyses the reaction hydrogenselenide + ATP + H2O = selenophosphate + AMP + phosphate + 2 H(+). Its function is as follows. Synthesizes selenophosphate from selenide and ATP. The polypeptide is Selenide, water dikinase (Burkholderia cenocepacia (strain ATCC BAA-245 / DSM 16553 / LMG 16656 / NCTC 13227 / J2315 / CF5610) (Burkholderia cepacia (strain J2315))).